The chain runs to 368 residues: Cobalt-precorrin-5B C(1)-methyltransferase (368 aa).

This sequence belongs to the CbiD family.

The enzyme catalyses Co-precorrin-5B + S-adenosyl-L-methionine = Co-precorrin-6A + S-adenosyl-L-homocysteine. It functions in the pathway cofactor biosynthesis; adenosylcobalamin biosynthesis; cob(II)yrinate a,c-diamide from sirohydrochlorin (anaerobic route): step 6/10. In terms of biological role, catalyzes the methylation of C-1 in cobalt-precorrin-5B to form cobalt-precorrin-6A. In Brucella ovis (strain ATCC 25840 / 63/290 / NCTC 10512), this protein is Cobalt-precorrin-5B C(1)-methyltransferase.